A 452-amino-acid polypeptide reads, in one-letter code: Trigger factor (452 aa).

In terms of domain architecture, PPIase FKBP-type spans Gly-171–Thr-256.

It belongs to the FKBP-type PPIase family. Tig subfamily.

It is found in the cytoplasm. The enzyme catalyses [protein]-peptidylproline (omega=180) = [protein]-peptidylproline (omega=0). Its function is as follows. Involved in protein export. Acts as a chaperone by maintaining the newly synthesized protein in an open conformation. Functions as a peptidyl-prolyl cis-trans isomerase. This is Trigger factor from Rhodopseudomonas palustris (strain ATCC BAA-98 / CGA009).